The following is a 450-amino-acid chain: Putative mediator of RNA polymerase II transcription subunit 27 (450 aa).

A coiled-coil region spans residues 15–118 (QQQQAQQHQQ…QKLKKSMDLV (104 aa)).

It belongs to the Mediator complex subunit 27 family. Component of the Mediator complex.

Its subcellular location is the nucleus. Functionally, component of the Mediator complex, a coactivator involved in the regulated transcription of nearly all RNA polymerase II-dependent genes. Mediator functions as a bridge to convey information from gene-specific regulatory proteins to the basal RNA polymerase II transcription machinery. Mediator is recruited to promoters by direct interactions with regulatory proteins and serves as a scaffold for the assembly of a functional preinitiation complex with RNA polymerase II and the general transcription factors. The sequence is that of Putative mediator of RNA polymerase II transcription subunit 27 (med27) from Dictyostelium discoideum (Social amoeba).